Reading from the N-terminus, the 311-residue chain is MNKNKPFIVVIVGPTASGKTELSIELAKRINGEIISGDSMQVYKHMNIGTAKVTPEEMDGIPHHLIDILNPDDTFSAYEFKRLAEDLITDITNRGKVPIIAGGTGLYIQSLIYNYELEDETVTPAQLSIVKQKLSALEHLDNQQLHDYLAQFDAVSAENIHPNNRQRGLRAIEYYLKTKKLLSNRKKVQQFTENYDTLLLGIEMSRKTLYSRINKRVDIMLDHGLFREVQQLVEQGYESCQSMQAIGYKELIPVINGQMIYEDAVNDLKQHSRQYAKRQMTWFKNKMSVHWLDKENMSLQMMLDEITTQIK.

13-20 (GPTASGKT) provides a ligand contact to ATP. Residue 15-20 (TASGKT) coordinates substrate. Interaction with substrate tRNA regions lie at residues 38-41 (DSMQ) and 166-170 (QRGLR).

It belongs to the IPP transferase family. As to quaternary structure, monomer. Mg(2+) is required as a cofactor.

The enzyme catalyses adenosine(37) in tRNA + dimethylallyl diphosphate = N(6)-dimethylallyladenosine(37) in tRNA + diphosphate. Its function is as follows. Catalyzes the transfer of a dimethylallyl group onto the adenine at position 37 in tRNAs that read codons beginning with uridine, leading to the formation of N6-(dimethylallyl)adenosine (i(6)A). The chain is tRNA dimethylallyltransferase from Staphylococcus aureus (strain MSSA476).